The following is a 219-amino-acid chain: Glutathione S-transferase U19 (219 aa).

The GST N-terminal domain maps to 3–82; it reads NEVILLDFWP…YIDEVWSHKN (80 aa). Glutathione is bound by residues 13-14, 39-40, 53-54, and 66-67; these read SM, NK, KI, and ES. The GST C-terminal domain occupies 88 to 208; that stretch reads DPYLRAQARF…LPDPEKVTEF (121 aa). Phosphoserine is present on serine 198.

It belongs to the GST superfamily. Tau family.

It localises to the cytoplasm. Its subcellular location is the cytosol. It catalyses the reaction RX + glutathione = an S-substituted glutathione + a halide anion + H(+). In terms of biological role, catalyzes the glutathionylation of 12-oxophytodienoate (OPDA). In vitro, possesses glutathione S-transferase activity toward 1-chloro-2,4-dinitrobenzene (CDNB) and benzyl isothiocyanate (BITC), and glutathione peroxidase activity toward cumene hydroperoxide. This Arabidopsis thaliana (Mouse-ear cress) protein is Glutathione S-transferase U19 (GSTU19).